The chain runs to 199 residues: MLRFVVLSLTLMVFINSSNFPKTAATPPGTYQNHTTYVKTACNSTTYPTMCYNCLSSYSSTIKSDPIKLCTTSLNLNVKSAKNATLVVSNLLQKAKAAKSHEVSILKDCVDEMKDTIDELKQAVAEMKYVRGGGKTTEEHLKNVKTWVSSALTDEGTCTDGFEEGRVNVETKKKVKKAISELSKTTSNTLALLTHYLSY.

Positions 1 to 25 are cleaved as a signal peptide; the sequence is MLRFVVLSLTLMVFINSSNFPKTAA. N-linked (GlcNAc...) asparagine glycosylation is found at asparagine 16, asparagine 33, asparagine 43, and asparagine 83. Cysteines 42 and 51 form a disulfide. An intrachain disulfide couples cysteine 109 to cysteine 158.

The protein belongs to the PMEI family. In terms of assembly, binds reversibly to PME3 to inhibit its activity; the stability of the PME3-PMEI4 complex and the inhibition of the pectin methylesterase (PME) activity is pH-dependent, based on protonation status of amino-acids at the complex interface. In terms of tissue distribution, expressed in outer cell layer of roots, particularly in the root-hair zone. Expressed in roots and siliques.

The protein resides in the secreted. The protein localises to the extracellular space. Its subcellular location is the apoplast. Its function is as follows. Pectin methylesterase (PME) inhibitor that can target the root-expressed PME17 and PME3 in a pH-dependent manner, mainly in slightly acidic conditions (pH 6.3 and 5.0) but not at pH 7.5; this processus relies on changes in the protonation of amino acids involved in intermolecular and intramolecular interactions. Regulate de-methylesterification of pectins in roots and affects root growth. The sequence is that of Pectinesterase inhibitor 4 from Arabidopsis thaliana (Mouse-ear cress).